A 78-amino-acid chain; its full sequence is Acyl carrier protein (78 aa).

The Carrier domain occupies Ser-2–Gln-77. Ser-37 bears the O-(pantetheine 4'-phosphoryl)serine mark.

The protein belongs to the acyl carrier protein (ACP) family. In terms of processing, 4'-phosphopantetheine is transferred from CoA to a specific serine of apo-ACP by AcpS. This modification is essential for activity because fatty acids are bound in thioester linkage to the sulfhydryl of the prosthetic group.

Its subcellular location is the cytoplasm. Its pathway is lipid metabolism; fatty acid biosynthesis. In terms of biological role, carrier of the growing fatty acid chain in fatty acid biosynthesis. This chain is Acyl carrier protein, found in Sinorhizobium fredii (strain NBRC 101917 / NGR234).